The chain runs to 67 residues: Large ribosomal subunit protein uL29 (67 aa).

The protein belongs to the universal ribosomal protein uL29 family.

The protein is Large ribosomal subunit protein uL29 of Staphylothermus marinus (strain ATCC 43588 / DSM 3639 / JCM 9404 / F1).